The primary structure comprises 236 residues: 15,16-dihydrobiliverdin:ferredoxin oxidoreductase (236 aa).

This sequence belongs to the HY2 family.

It carries out the reaction 15,16-dihydrobiliverdin + oxidized 2[4Fe-4S]-[ferredoxin] = biliverdin IXalpha + reduced 2[4Fe-4S]-[ferredoxin] + 2 H(+). Functionally, catalyzes the two-electron reduction of biliverdin IX-alpha at the C15 methine bridge. The chain is 15,16-dihydrobiliverdin:ferredoxin oxidoreductase from Prochlorococcus marinus (strain MIT 9312).